Reading from the N-terminus, the 45-residue chain is NLR family pyrin domain-containing protein 2B (45 aa).

Expressed in all tissues tested, including spleen, lymph node, thymus, tonsil, peripheral blood leukocyte, bone marrow, liver, heart, brain, placenta, lung, skeletal muscle, kidney and pancreas.

Its subcellular location is the cytoplasm. The protein localises to the nucleus. In terms of biological role, may function as a negative regulator of NF-kappa-B by preventing RELA/p65 phosphorylation at 'Ser-536', thereby inhibiting its transcriptional activity. Through NF-kappa-B regulation may control cytokine release upon Toll-like receptors activation and therefore play a role in modulation of innate immunity. May also play a role in cell cycle progression and apoptotic process. This Homo sapiens (Human) protein is NLR family pyrin domain-containing protein 2B.